The following is a 347-amino-acid chain: Glycerol-3-phosphate dehydrogenase [NAD(P)+] (347 aa).

Residues Trp-20, Arg-39, and Lys-118 each contribute to the NADPH site. Residues Lys-118, Gly-152, and Ser-154 each coordinate sn-glycerol 3-phosphate. An NADPH-binding site is contributed by Ala-156. 5 residues coordinate sn-glycerol 3-phosphate: Lys-207, Asp-260, Ser-270, Arg-271, and Asn-272. The active-site Proton acceptor is the Lys-207. Arg-271 contacts NADPH. NADPH contacts are provided by Val-295 and Glu-297.

The protein belongs to the NAD-dependent glycerol-3-phosphate dehydrogenase family.

The protein localises to the cytoplasm. It catalyses the reaction sn-glycerol 3-phosphate + NAD(+) = dihydroxyacetone phosphate + NADH + H(+). The catalysed reaction is sn-glycerol 3-phosphate + NADP(+) = dihydroxyacetone phosphate + NADPH + H(+). It participates in membrane lipid metabolism; glycerophospholipid metabolism. Functionally, catalyzes the reduction of the glycolytic intermediate dihydroxyacetone phosphate (DHAP) to sn-glycerol 3-phosphate (G3P), the key precursor for phospholipid synthesis. The sequence is that of Glycerol-3-phosphate dehydrogenase [NAD(P)+] from Cupriavidus pinatubonensis (strain JMP 134 / LMG 1197) (Cupriavidus necator (strain JMP 134)).